Reading from the N-terminus, the 447-residue chain is Phosphoglucosamine mutase (447 aa).

Ser-103 functions as the Phosphoserine intermediate in the catalytic mechanism. Residues Ser-103, Asp-242, Asp-244, and Asp-246 each coordinate Mg(2+). Ser-103 bears the Phosphoserine mark.

The protein belongs to the phosphohexose mutase family. Mg(2+) serves as cofactor. Activated by phosphorylation.

It carries out the reaction alpha-D-glucosamine 1-phosphate = D-glucosamine 6-phosphate. Catalyzes the conversion of glucosamine-6-phosphate to glucosamine-1-phosphate. The protein is Phosphoglucosamine mutase of Paracoccus denitrificans (strain Pd 1222).